We begin with the raw amino-acid sequence, 191 residues long: ECF RNA polymerase sigma-E factor (191 aa).

Residues methionine 1 to glycine 153 form a binds RNAP core region. The tract at residues leucine 25–arginine 92 is sigma-70 factor domain-2. Positions aspartate 48 to leucine 61 match the Polymerase core binding motif. Residues glutamine 129 to alanine 180 form a sigma-70 factor domain-4 region. Positions tyrosine 156–phenylalanine 175 form a DNA-binding region, H-T-H motif.

Belongs to the sigma-70 factor family. ECF subfamily. In terms of assembly, interacts transiently with the RNAP catalytic core formed by RpoA, RpoB, RpoC and RpoZ (2 alpha, 1 beta, 1 beta' and 1 omega subunit) to form the RNAP holoenzyme that can initiate transcription. Interacts 1:1 with anti-sigma-E factor RseA which prevents binding to RNAP catalytic core.

The protein resides in the cytoplasm. With respect to regulation, ECF sigma-E is held in an inactive form by its cognate anti-sigma factor (RseA) until released by regulated intramembrane proteolysis (RIP). RIP occurs when an extracytoplasmic signal (periplasmic, acid or heat stress) triggers a concerted proteolytic cascade to transmit information and elicit cellular responses. In S.typhimurium there are 2 cascades, the heat shock response which depends on DegS and RseP, and acid response which depends only on RseP. The anti-sigma factor RseA is an inner membrane protein, binding sigma-E in the cytoplasm and RseB in the periplasm. RseA is first cut extracytoplasmically (site-1 protease, S1P, by DegS), then within the membrane itself (site-2 protease, S2P, by RseP), while cytoplasmic proteases (predominantly ClpX-ClpP) finish degrading the regulatory protein, liberating sigma-E. Degradation of RseA requires 2 signals to activate DegS; an outer membrane protein (OMP) signal activates DegS, while an LPS signal causes release of RseB from RseA, freeing RseA to be cleaved. OMP stress can be abrogated by overexpression of the sRNA rybB. In terms of biological role, sigma factors are initiation factors that promote the attachment of RNA polymerase (RNAP) to specific initiation sites and are then released. Extracytoplasmic function (ECF) sigma-E controls the envelope stress response, responding to periplasmic protein stress, increased levels of periplasmic lipopolysaccharide (LPS) as well as acid stress, heat shock and oxidative stress; it controls protein processing in the extracytoplasmic compartment. The sequence is that of ECF RNA polymerase sigma-E factor (rpoE) from Salmonella typhimurium (strain 14028s / SGSC 2262).